A 526-amino-acid chain; its full sequence is Methane monooxygenase component A alpha chain (526 aa).

The Fe cation site is built by Glu-114, Glu-144, and His-147. Residue Cys-151 is part of the active site. 3 residues coordinate Fe cation: Glu-209, Glu-243, and His-246.

This sequence belongs to the TmoA/XamoA family. M.trichosporium has two forms of methane monooxygenase, a soluble and a membrane-bound type. The soluble type consists of four components (A to D): protein A, comprising three chains, in an alpha-2, beta-2, gamma-2 configuration, is a nonheme iron protein containing an unusual mu-hydroxo bridge structure at its active site and interacts with both oxygen and methane. Fe cation is required as a cofactor.

The enzyme catalyses methane + NADH + O2 + H(+) = methanol + NAD(+) + H2O. It catalyses the reaction methane + NADPH + O2 + H(+) = methanol + NADP(+) + H2O. Its function is as follows. Responsible for the initial oxygenation of methane to methanol in methanotrophs. It also catalyzes the monohydroxylation of a variety of unactivated alkenes, alicyclic, aromatic and heterocyclic compounds. The chain is Methane monooxygenase component A alpha chain (mmoX) from Methylosinus trichosporium.